The chain runs to 793 residues: WASP homolog-associated protein with actin, membranes and microtubules (793 aa).

The mediates association with membranes stretch occupies residues 1 to 253; it reads MDSEQPDSLD…EVATSCKLGI (253 aa). The segment at 254 to 623 is mediates interaction with microtubules; that stretch reads LKSLDEDELG…FVPVSDQTLS (370 aa). 2 coiled-coil regions span residues 265-290 and 445-503; these read RRVA…SIQD and LGDN…LHQH. 2 disordered regions span residues 556-661 and 675-699; these read SMVS…SFQG and EDRP…PGSM. Basic residues predominate over residues 566 to 579; it reads SQKRLSTAHHHKTA. Over residues 618–628 the composition is skewed to polar residues; that stretch reads SDQTLSGSSED. The interval 624-793 is mediates actin nucleation; sequence GSSEDLSLPP…DEPSPTEWDR (170 aa). Residues 632–654 are compositionally biased toward pro residues; it reads PPQPPAPPLPPPPPPPPPPPLPP. WH2 domains follow at residues 698 to 716 and 728 to 745; these read SMDE…LRKV and VNEQ…LKKV. The stretch at 755–785 forms a coiled coil; that stretch reads KKSTSDLERSIREALERIKKVSADSEEDNDE. The segment at 772 to 793 is disordered; sequence IKKVSADSEEDNDEPSPTEWDR. Over residues 778-787 the composition is skewed to acidic residues; it reads DSEEDNDEPS. Position 779 is a phosphoserine (S779).

In terms of assembly, interacts with ACTR3; indicative for an association with the ARP2/3 complex. Associates with microtubules; in vitro binds to tubulin heterodimer in a 1:1 stoichiometry; decorates microtubules with a repeat of 80 A along protofilaments. Interacts with RHOD (in GTP-bound form).

It localises to the cytoplasm. Its subcellular location is the endoplasmic reticulum-Golgi intermediate compartment. It is found in the cytoplasmic vesicle membrane. The protein resides in the golgi apparatus. The protein localises to the cis-Golgi network. Its function is as follows. Acts as a nucleation-promoting factor (NPF) that stimulates Arp2/3-mediated actin polymerization both at the Golgi apparatus and along tubular membranes. Involved as a regulator of Golgi positioning and morphology. Its activity in membrane tubulation requires F-actin and interaction with microtubules. Proposed to use coordinated actin-nucleating and microtubule-binding activities of distinct WHAMM molecules to drive membrane tubule elongation; when MT-bound can recruit and remodel membrane vesicles but is prevented to activate the Arp2/3 complex. Required for RhoD-dependent actin reorganization such as in cell adhesion and cell migration. Participates in vesicle transport between the endoplasmic reticulum and the Golgi complex. The protein is WASP homolog-associated protein with actin, membranes and microtubules (Whamm) of Mus musculus (Mouse).